A 350-amino-acid chain; its full sequence is Dauer larva development regulatory growth factor daf-7 (350 aa).

The first 21 residues, 1-21 (MFMASSLPVFIFLLSLPHGLT), serve as a signal peptide directing secretion. A propeptide spanning residues 22 to 234 (FNCTNSGVCI…TRPKGSRKRR (213 aa)) is cleaved from the precursor. Asn-23 carries N-linked (GlcNAc...) asparagine glycosylation. Intrachain disulfides connect Cys-241-Cys-251, Cys-250-Cys-315, Cys-278-Cys-347, and Cys-282-Cys-349.

The protein belongs to the TGF-beta family. As to expression, expressed in the chemosensory neurons, including in the ASJ neurons in males. Expressed in the ASI neurons.

It localises to the secreted. Under harsh environmental conditions, larvae enter a developmentally arrested state known as dauer; TGF-beta-like daf-7 acts to inhibit dauer larva formation and promote growth. May be a ligand to cell surface receptor daf-4. May act as a negative regulator of dauer larva development by transducing chemosensory information from ASI neurons. Involved in sensitivity to CO2 levels. Involved in mate searching behavior of males, acting in concert with the neuropeptide pdf-1. In AWC neurons, acts to promote expression of srsx-3, a member of the GPCR family. The chain is Dauer larva development regulatory growth factor daf-7 from Caenorhabditis elegans.